The following is a 361-amino-acid chain: Histidinol-phosphate aminotransferase (361 aa).

Lys219 is modified (N6-(pyridoxal phosphate)lysine).

The protein belongs to the class-II pyridoxal-phosphate-dependent aminotransferase family. Histidinol-phosphate aminotransferase subfamily. Homodimer. The cofactor is pyridoxal 5'-phosphate.

The enzyme catalyses L-histidinol phosphate + 2-oxoglutarate = 3-(imidazol-4-yl)-2-oxopropyl phosphate + L-glutamate. It functions in the pathway amino-acid biosynthesis; L-histidine biosynthesis; L-histidine from 5-phospho-alpha-D-ribose 1-diphosphate: step 7/9. In Cereibacter sphaeroides (strain KD131 / KCTC 12085) (Rhodobacter sphaeroides), this protein is Histidinol-phosphate aminotransferase.